The sequence spans 490 residues: GTPase Der (490 aa).

2 EngA-type G domains span residues 3–166 (PVVA…VDEI) and 203–376 (IKLA…DSST). GTP is bound by residues 9–16 (GRPNVGKS), 56–60 (DTGGI), 118–121 (NKTD), 209–216 (GRPNVGKS), 256–260 (DTAGV), and 321–324 (NKWD). The 85-residue stretch at 377–461 (RRQSTAMLTR…PIRIQFKEGE (85 aa)) folds into the KH-like domain.

It belongs to the TRAFAC class TrmE-Era-EngA-EngB-Septin-like GTPase superfamily. EngA (Der) GTPase family. In terms of assembly, associates with the 50S ribosomal subunit.

In terms of biological role, GTPase that plays an essential role in the late steps of ribosome biogenesis. The sequence is that of GTPase Der from Enterobacter sp. (strain 638).